The sequence spans 155 residues: MSITAMDAKLQRILEESTCFGIGHDPNVKECKMCDVREQCKAKTQGMNVPTPTRKKPEDVAPAKEKPTTKKTTAKKSTAKEEKKETAPKAKETKAKPKSKPKKAKAPENPNLPNFKEMSFEELVELAKERNVEWKDYNSPNITRMRLIMALKASY.

The tract at residues 41 to 114 is disordered; it reads KAKTQGMNVP…KAPENPNLPN (74 aa). 2 stretches are compositionally biased toward basic and acidic residues: residues 55–68 and 78–95; these read KKPEDVAPAKEKPT and TAKEEKKETAPKAKETKA.

Its function is as follows. Required for late gene transcription and DNA replication. This chain is Gene 27 protein (27), found in Bacillus subtilis (Bacteriophage SP01).